Reading from the N-terminus, the 138-residue chain is uncharacterized protein (138 aa).

The N-terminal stretch at 1 to 35 is a signal peptide; that stretch reads MVAPAARVFLRAVRAALTSTVPDLLCLLARGSPRG.

In terms of tissue distribution, isoform 1 is highly expressed in small intestine, testis and kidney, medium expressed in brain and heart and low expressed in colon; it could not be detected in liver, adrenal gland and pancreas.

It is found in the secreted. This is an uncharacterized protein from Homo sapiens (Human).